We begin with the raw amino-acid sequence, 519 residues long: SMR domain-containing protein At5g58720 (519 aa).

Basic residues predominate over residues 1–15 (MKQKNQHKKKKKRSC). 2 disordered regions span residues 1–47 (MKQK…REIE) and 92–128 (ESGDDPSTSSVASGSSGQETASTSEYGAGSSSSCSED). Basic and acidic residues predominate over residues 28–47 (GNKKDVEEERKDGEGKREIE). Residues 98 to 127 (STSSVASGSSGQETASTSEYGAGSSSSCSE) show a composition bias toward low complexity. Residues 428–502 (IDLHGQHVKP…NRGTLLIKLD (75 aa)) enclose the Smr domain.

As to quaternary structure, interacts with PRL1.

This Arabidopsis thaliana (Mouse-ear cress) protein is SMR domain-containing protein At5g58720.